A 397-amino-acid chain; its full sequence is Cystinosin (397 aa).

An N-terminal signal peptide occupies residues M1–A24. The Lumenal segment spans residues Q25–R126. N-linked (GlcNAc...) asparagine glycans are attached at residues N43 and N86. Residues A127 to F147 form a helical membrane-spanning segment. The PQ-loop 1 domain maps to S132–F187. The Cytoplasmic segment spans residues Y148–F167. Residues L168–I188 traverse the membrane as a helical segment. At E189–D210 the chain is on the lumenal side. The chain crosses the membrane as a helical span at residues V211 to Y231. The Cytoplasmic segment spans residues Q232–S239. The helical transmembrane segment at F240–A260 threads the bilayer. Over G261–S263 the chain is Lumenal. Residues V264–I284 traverse the membrane as a helical segment. One can recognise a PQ-loop 2 domain in the interval L271–N327. The Cytoplasmic segment spans residues K285 to W302. A helical transmembrane segment spans residues S303 to L323. Residues N324–K340 are Lumenal-facing. A helical membrane pass occupies residues F341–F361. Residues Y362–Y397 are Cytoplasmic-facing. Positions L373 to E385 are enriched in polar residues. The disordered stretch occupies residues L373–Y397.

Belongs to the cystinosin family.

It is found in the lysosome membrane. The catalysed reaction is L-cystine(out) + H(+)(out) = L-cystine(in) + H(+)(in). Cystine/H(+) symporter that mediates export of cystine, the oxidized dimer of cysteine, from lysosomes. Involved in cysteine homeostasis during periods of fasting, which indirectly regulates mTORC1-mediated signaling by supporting de novo CoA synthesis, the TCA cycle and amino acid metabolism during periods of food shortage. Important for maintaining autophagy, and for development and survival during periods of fasting. The chain is Cystinosin from Drosophila melanogaster (Fruit fly).